Consider the following 374-residue polypeptide: Queuine tRNA-ribosyltransferase (374 aa).

Catalysis depends on D89, which acts as the Proton acceptor. Residues 89–93 (DSGGF), D143, Q187, and G214 contribute to the substrate site. Positions 245 to 251 (GVGKPED) are RNA binding. D264 functions as the Nucleophile in the catalytic mechanism. Positions 269–273 (TRNAR) are RNA binding; important for wobble base 34 recognition. Residues C302, C304, C307, and H333 each coordinate Zn(2+).

It belongs to the queuine tRNA-ribosyltransferase family. As to quaternary structure, homodimer. Within each dimer, one monomer is responsible for RNA recognition and catalysis, while the other monomer binds to the replacement base PreQ1. Zn(2+) serves as cofactor.

The catalysed reaction is 7-aminomethyl-7-carbaguanine + guanosine(34) in tRNA = 7-aminomethyl-7-carbaguanosine(34) in tRNA + guanine. The protein operates within tRNA modification; tRNA-queuosine biosynthesis. Its function is as follows. Catalyzes the base-exchange of a guanine (G) residue with the queuine precursor 7-aminomethyl-7-deazaguanine (PreQ1) at position 34 (anticodon wobble position) in tRNAs with GU(N) anticodons (tRNA-Asp, -Asn, -His and -Tyr). Catalysis occurs through a double-displacement mechanism. The nucleophile active site attacks the C1' of nucleotide 34 to detach the guanine base from the RNA, forming a covalent enzyme-RNA intermediate. The proton acceptor active site deprotonates the incoming PreQ1, allowing a nucleophilic attack on the C1' of the ribose to form the product. After dissociation, two additional enzymatic reactions on the tRNA convert PreQ1 to queuine (Q), resulting in the hypermodified nucleoside queuosine (7-(((4,5-cis-dihydroxy-2-cyclopenten-1-yl)amino)methyl)-7-deazaguanosine). The chain is Queuine tRNA-ribosyltransferase from Shewanella loihica (strain ATCC BAA-1088 / PV-4).